We begin with the raw amino-acid sequence, 547 residues long: Calcium-dependent protein kinase 16 (547 aa).

The segment at 1–53 (MGNCCRSPAAAAREDVKTSHFPASTGGGKKKPHQARNGGGGGGGGGGGGWEKK) is disordered. A lipid anchor (N-myristoyl glycine) is attached at glycine 2. Residues 37–49 (NGGGGGGGGGGGG) are compositionally biased toward gly residues. The Protein kinase domain maps to 73 to 331 (YALDRELGRG…AKQVLEHTWL (259 aa)). ATP-binding positions include 79–87 (LGRGEFGVT) and lysine 102. The Proton acceptor role is filled by aspartate 197. The tract at residues 337 to 367 (APNVPLGDIVKSRLKQFSRMNRFKRRALRVI) is autoinhibitory domain. 4 consecutive EF-hand domains span residues 374 to 409 (EEVEDIKDMFKVMDTDNDGIVSYEELKSGIAKFGSH), 410 to 445 (LAESEVQMLIEAVDTNGRGALDYGEFLAVSLHLQRM), 446 to 481 (ANGEHLRRAFLFFDKDGNGYIEPEELQEALVEDGAT), and 482 to 517 (DIMEVVKDILQEVDTDKDGKISYEEFVAMMKTGTDW). Ca(2+) is bound by residues aspartate 387, aspartate 389, aspartate 391, glutamate 398, aspartate 423, asparagine 425, glutamate 434, aspartate 459, aspartate 461, asparagine 463, tyrosine 465, glutamate 470, aspartate 495, aspartate 497, aspartate 499, lysine 501, and glutamate 506.

The protein belongs to the protein kinase superfamily. Ser/Thr protein kinase family. CDPK subfamily.

It localises to the membrane. It catalyses the reaction L-seryl-[protein] + ATP = O-phospho-L-seryl-[protein] + ADP + H(+). The enzyme catalyses L-threonyl-[protein] + ATP = O-phospho-L-threonyl-[protein] + ADP + H(+). Activated by calcium. Autophosphorylation may play an important role in the regulation of the kinase activity. Functionally, may play a role in signal transduction pathways that involve calcium as a second messenger. In Oryza sativa subsp. japonica (Rice), this protein is Calcium-dependent protein kinase 16.